The sequence spans 301 residues: Glycine--tRNA ligase alpha subunit (301 aa).

It belongs to the class-II aminoacyl-tRNA synthetase family. In terms of assembly, tetramer of two alpha and two beta subunits.

It is found in the cytoplasm. The catalysed reaction is tRNA(Gly) + glycine + ATP = glycyl-tRNA(Gly) + AMP + diphosphate. The protein is Glycine--tRNA ligase alpha subunit of Actinobacillus pleuropneumoniae serotype 5b (strain L20).